Here is a 332-residue protein sequence, read N- to C-terminus: tRNA-dihydrouridine synthase B (332 aa).

FMN contacts are provided by residues Pro19 to Ala21 and Gln73. Cys103 functions as the Proton donor in the catalytic mechanism. Residues Lys142, Asn203–Asp205, and Gly227–Arg228 each bind FMN.

It belongs to the Dus family. DusB subfamily. FMN serves as cofactor.

It catalyses the reaction a 5,6-dihydrouridine in tRNA + NAD(+) = a uridine in tRNA + NADH + H(+). The catalysed reaction is a 5,6-dihydrouridine in tRNA + NADP(+) = a uridine in tRNA + NADPH + H(+). Catalyzes the synthesis of 5,6-dihydrouridine (D), a modified base found in the D-loop of most tRNAs, via the reduction of the C5-C6 double bond in target uridines. The chain is tRNA-dihydrouridine synthase B from Pseudomonas aeruginosa (strain ATCC 15692 / DSM 22644 / CIP 104116 / JCM 14847 / LMG 12228 / 1C / PRS 101 / PAO1).